Reading from the N-terminus, the 563-residue chain is Dihydroxy-acid dehydratase (563 aa).

Cys51 serves as a coordination point for [2Fe-2S] cluster. A Mg(2+)-binding site is contributed by Asp83. Cys124 is a binding site for [2Fe-2S] cluster. The Mg(2+) site is built by Asp125 and Lys126. An N6-carboxylysine modification is found at Lys126. Position 196 (Cys196) interacts with [2Fe-2S] cluster. Glu448 provides a ligand contact to Mg(2+). The active-site Proton acceptor is Ser474.

This sequence belongs to the IlvD/Edd family. Homodimer. [2Fe-2S] cluster is required as a cofactor. Mg(2+) serves as cofactor.

It catalyses the reaction (2R)-2,3-dihydroxy-3-methylbutanoate = 3-methyl-2-oxobutanoate + H2O. It carries out the reaction (2R,3R)-2,3-dihydroxy-3-methylpentanoate = (S)-3-methyl-2-oxopentanoate + H2O. Its pathway is amino-acid biosynthesis; L-isoleucine biosynthesis; L-isoleucine from 2-oxobutanoate: step 3/4. It participates in amino-acid biosynthesis; L-valine biosynthesis; L-valine from pyruvate: step 3/4. Functionally, functions in the biosynthesis of branched-chain amino acids. Catalyzes the dehydration of (2R,3R)-2,3-dihydroxy-3-methylpentanoate (2,3-dihydroxy-3-methylvalerate) into 2-oxo-3-methylpentanoate (2-oxo-3-methylvalerate) and of (2R)-2,3-dihydroxy-3-methylbutanoate (2,3-dihydroxyisovalerate) into 2-oxo-3-methylbutanoate (2-oxoisovalerate), the penultimate precursor to L-isoleucine and L-valine, respectively. This is Dihydroxy-acid dehydratase from Polynucleobacter necessarius subsp. necessarius (strain STIR1).